The sequence spans 75 residues: MVIKKLDVVTQVCPFPLIEAKAALAEMVSGDELVIEFDCTQATEAIPQWAAEEGHAITDYQQIGDAAWSITVQKA.

Cysteine 13 functions as the Cysteine persulfide intermediate in the catalytic mechanism.

This sequence belongs to the sulfur carrier protein TusA family.

Functionally, involved in thiosulfate metabolism. This Escherichia coli (strain K12) protein is Putative sulfur carrier protein TsuB.